The sequence spans 225 residues: pH-response regulator palI/RIM9 homolog 2 (225 aa).

Residues 1-4 are Cytoplasmic-facing; that stretch reads MLVK. The helical transmembrane segment at 5 to 25 threads the bilayer; sequence IVLVVLLTLALVFECFSTISV. Residues 26–87 lie on the Extracellular side of the membrane; the sequence is PITIGLYISE…PNHAKYALSN (62 aa). A helical transmembrane segment spans residues 88 to 108; sequence LLLVHVLAFVCVTILWVFGML. Residues 109–120 lie on the Cytoplasmic side of the membrane; that stretch reads TCFRCIKTSRRM. The helical transmembrane segment at 121–141 threads the bilayer; the sequence is LIIAVLWSMLTFMVTLLGFLI. Residues 142–153 are Extracellular-facing; the sequence is DILIFSSHVTWC. The helical transmembrane segment at 154–174 threads the bilayer; the sequence is TWLTLASAFFTVLSGTVLCVM. The Cytoplasmic segment spans residues 175–225; it reads RRNLTYDKFLESKPEKHGVYVPLCRLNDVEELEIPWCNTMNHQALTAPTPM.

The protein belongs to the palI/RIM9 family.

It localises to the cell membrane. In terms of biological role, required for the proteolytic cleavage of the transcription factor RIM101 in response to alkaline ambient pH. This Kluyveromyces lactis (strain ATCC 8585 / CBS 2359 / DSM 70799 / NBRC 1267 / NRRL Y-1140 / WM37) (Yeast) protein is pH-response regulator palI/RIM9 homolog 2.